An 82-amino-acid chain; its full sequence is Small ribosomal subunit protein bS18 (82 aa).

Residues M1–C20 form a disordered region.

Belongs to the bacterial ribosomal protein bS18 family. In terms of assembly, part of the 30S ribosomal subunit. Forms a tight heterodimer with protein bS6.

Functionally, binds as a heterodimer with protein bS6 to the central domain of the 16S rRNA, where it helps stabilize the platform of the 30S subunit. The polypeptide is Small ribosomal subunit protein bS18 (Allorhizobium ampelinum (strain ATCC BAA-846 / DSM 112012 / S4) (Agrobacterium vitis (strain S4))).